A 154-amino-acid chain; its full sequence is Endoribonuclease YbeY (154 aa).

Zn(2+) contacts are provided by His-115, His-119, and His-125.

Belongs to the endoribonuclease YbeY family. The cofactor is Zn(2+).

It localises to the cytoplasm. Its function is as follows. Single strand-specific metallo-endoribonuclease involved in late-stage 70S ribosome quality control and in maturation of the 3' terminus of the 16S rRNA. This Halorhodospira halophila (strain DSM 244 / SL1) (Ectothiorhodospira halophila (strain DSM 244 / SL1)) protein is Endoribonuclease YbeY.